Consider the following 470-residue polypeptide: 1-aminocyclopropane-1-carboxylate synthase 5 (470 aa).

The substrate site is built by Glu47 and Tyr85. Lys272 bears the N6-(pyridoxal phosphate)lysine mark. Ser461 is modified (phosphoserine).

Belongs to the class-I pyridoxal-phosphate-dependent aminotransferase family. Homodimer and heterodimer. In vivo, the relevance of heterodimerization with other ACS enzymes is however unsure. Interacts (via its C-terminal region) with FEI1, FEI2, ETO1, EOL1 and EOL2. Interacts with GRF3. The cofactor is pyridoxal 5'-phosphate. May be processed at its C-terminus. Post-translationally, ubiquitinated. The interaction with ETO1 (and possibly EOL1 and EOL2) mediate its proteasome-dependent degradation. Its stability and degradation plays a central role in ethylene biosynthesis. In terms of tissue distribution, expressed in roots and siliques.

It carries out the reaction S-adenosyl-L-methionine = 1-aminocyclopropane-1-carboxylate + S-methyl-5'-thioadenosine + H(+). Its pathway is alkene biosynthesis; ethylene biosynthesis via S-adenosyl-L-methionine; ethylene from S-adenosyl-L-methionine: step 1/2. Its function is as follows. 1-aminocyclopropane-1-carboxylate synthase (ACS) enzymes catalyze the conversion of S-adenosyl-L-methionine (SAM) into 1-aminocyclopropane-1-carboxylate (ACC), a direct precursor of ethylene. The protein is 1-aminocyclopropane-1-carboxylate synthase 5 (ACS5) of Arabidopsis thaliana (Mouse-ear cress).